Reading from the N-terminus, the 99-residue chain is Citrate lyase acyl carrier protein (99 aa).

Serine 14 carries the post-translational modification O-(phosphoribosyl dephospho-coenzyme A)serine.

This sequence belongs to the CitD family. In terms of assembly, oligomer with a subunit composition of (alpha,beta,gamma)6.

It localises to the cytoplasm. Covalent carrier of the coenzyme of citrate lyase. The chain is Citrate lyase acyl carrier protein from Edwardsiella ictaluri (strain 93-146).